A 608-amino-acid polypeptide reads, in one-letter code: DNA mismatch repair protein MutL (608 aa).

It belongs to the DNA mismatch repair MutL/HexB family.

Functionally, this protein is involved in the repair of mismatches in DNA. It is required for dam-dependent methyl-directed DNA mismatch repair. May act as a 'molecular matchmaker', a protein that promotes the formation of a stable complex between two or more DNA-binding proteins in an ATP-dependent manner without itself being part of a final effector complex. In Anaeromyxobacter dehalogenans (strain 2CP-C), this protein is DNA mismatch repair protein MutL.